The primary structure comprises 164 residues: UPF0225 protein Shewana3_2159 (164 aa).

This sequence belongs to the UPF0225 family.

This Shewanella sp. (strain ANA-3) protein is UPF0225 protein Shewana3_2159.